The chain runs to 131 residues: GKIYEQCELAREFKRHGMDGYHGYSLGDWVCTAKHESNFNTAATNYNRGDQSTDYGILQINSRWWCNDGKTPKAKNACGIECSELLKADITAAVNCAKRIVRDPNGMGAWVAWTKYCKGKDVSQWIKGCKL.

The region spanning Lys2–Leu131 is the C-type lysozyme domain. Intrachain disulfides connect Cys7–Cys129, Cys31–Cys117, Cys66–Cys82, and Cys78–Cys96. Residues Glu36 and Asp54 contribute to the active site.

This sequence belongs to the glycosyl hydrolase 22 family. Monomer.

The protein resides in the secreted. It catalyses the reaction Hydrolysis of (1-&gt;4)-beta-linkages between N-acetylmuramic acid and N-acetyl-D-glucosamine residues in a peptidoglycan and between N-acetyl-D-glucosamine residues in chitodextrins.. In terms of biological role, lysozymes have primarily a bacteriolytic function; those in tissues and body fluids are associated with the monocyte-macrophage system and enhance the activity of immunoagents. Has strong bacteriolytic activity against M.luteus and V.cholerae, weak bacteriolytic activity against P.aeruginosa and no activity against A.hydrophila. In Pelodiscus sinensis (Chinese softshell turtle), this protein is Lysozyme C (LYZ).